Reading from the N-terminus, the 284-residue chain is D-tagatose-1,6-bisphosphate aldolase subunit GatY (284 aa).

Residue aspartate 82 is the Proton donor of the active site. Histidine 83 and histidine 180 together coordinate Zn(2+). Glycine 181 serves as a coordination point for dihydroxyacetone phosphate. Histidine 208 is a Zn(2+) binding site. Dihydroxyacetone phosphate contacts are provided by residues 209-211 and 230-233; these read GAS and NVAT.

The protein belongs to the class II fructose-bisphosphate aldolase family. TagBP aldolase GatY subfamily. Forms a complex with GatZ. Requires Zn(2+) as cofactor.

It catalyses the reaction D-tagatofuranose 1,6-bisphosphate = D-glyceraldehyde 3-phosphate + dihydroxyacetone phosphate. The protein operates within carbohydrate metabolism; D-tagatose 6-phosphate degradation; D-glyceraldehyde 3-phosphate and glycerone phosphate from D-tagatose 6-phosphate: step 2/2. Catalytic subunit of the tagatose-1,6-bisphosphate aldolase GatYZ, which catalyzes the reversible aldol condensation of dihydroxyacetone phosphate (DHAP or glycerone-phosphate) with glyceraldehyde 3-phosphate (G3P) to produce tagatose 1,6-bisphosphate (TBP). Requires GatZ subunit for full activity and stability. Is involved in the catabolism of galactitol. The sequence is that of D-tagatose-1,6-bisphosphate aldolase subunit GatY from Shigella flexneri serotype 5b (strain 8401).